Consider the following 178-residue polypeptide: uncharacterized protein (178 aa).

It localises to the mitochondrion. This is an uncharacterized protein from Paramecium tetraurelia.